Here is a 284-residue protein sequence, read N- to C-terminus: Diaminopimelate epimerase (284 aa).

2 residues coordinate substrate: Asn-14 and Asn-67. Cys-76 acts as the Proton donor in catalysis. Substrate is bound by residues 77–78, Asn-166, Asn-199, and 217–218; these read GN and ER. Catalysis depends on Cys-226, which acts as the Proton acceptor. 227-228 is a binding site for substrate; the sequence is GT.

It belongs to the diaminopimelate epimerase family. Homodimer.

Its subcellular location is the cytoplasm. The enzyme catalyses (2S,6S)-2,6-diaminopimelate = meso-2,6-diaminopimelate. Its pathway is amino-acid biosynthesis; L-lysine biosynthesis via DAP pathway; DL-2,6-diaminopimelate from LL-2,6-diaminopimelate: step 1/1. Functionally, catalyzes the stereoinversion of LL-2,6-diaminopimelate (L,L-DAP) to meso-diaminopimelate (meso-DAP), a precursor of L-lysine and an essential component of the bacterial peptidoglycan. This is Diaminopimelate epimerase from Geobacillus sp. (strain WCH70).